We begin with the raw amino-acid sequence, 715 residues long: Ribosomal RNA large subunit methyltransferase K/L (715 aa).

Residues leucine 47–phenylalanine 158 form the THUMP domain.

It belongs to the methyltransferase superfamily. RlmKL family.

The protein localises to the cytoplasm. The catalysed reaction is guanosine(2445) in 23S rRNA + S-adenosyl-L-methionine = N(2)-methylguanosine(2445) in 23S rRNA + S-adenosyl-L-homocysteine + H(+). It carries out the reaction guanosine(2069) in 23S rRNA + S-adenosyl-L-methionine = N(2)-methylguanosine(2069) in 23S rRNA + S-adenosyl-L-homocysteine + H(+). In terms of biological role, specifically methylates the guanine in position 2445 (m2G2445) and the guanine in position 2069 (m7G2069) of 23S rRNA. This chain is Ribosomal RNA large subunit methyltransferase K/L, found in Colwellia psychrerythraea (strain 34H / ATCC BAA-681) (Vibrio psychroerythus).